The following is a 344-amino-acid chain: N-acetyl-gamma-glutamyl-phosphate reductase (344 aa).

Cys150 is an active-site residue.

The protein belongs to the NAGSA dehydrogenase family. Type 1 subfamily.

The protein localises to the cytoplasm. It carries out the reaction N-acetyl-L-glutamate 5-semialdehyde + phosphate + NADP(+) = N-acetyl-L-glutamyl 5-phosphate + NADPH + H(+). It functions in the pathway amino-acid biosynthesis; L-arginine biosynthesis; N(2)-acetyl-L-ornithine from L-glutamate: step 3/4. Catalyzes the NADPH-dependent reduction of N-acetyl-5-glutamyl phosphate to yield N-acetyl-L-glutamate 5-semialdehyde. The sequence is that of N-acetyl-gamma-glutamyl-phosphate reductase from Pseudomonas entomophila (strain L48).